Here is a 233-residue protein sequence, read N- to C-terminus: LexA repressor (233 aa).

Residues 26–46 constitute a DNA-binding region (H-T-H motif); the sequence is FDEMKEALDLRSKSGIHRLIT. Residues Ser-154 and Lys-192 each act as for autocatalytic cleavage activity in the active site.

The protein belongs to the peptidase S24 family. Homodimer.

It carries out the reaction Hydrolysis of Ala-|-Gly bond in repressor LexA.. Represses a number of genes involved in the response to DNA damage (SOS response), including recA and lexA. In the presence of single-stranded DNA, RecA interacts with LexA causing an autocatalytic cleavage which disrupts the DNA-binding part of LexA, leading to derepression of the SOS regulon and eventually DNA repair. This chain is LexA repressor, found in Roseobacter denitrificans (strain ATCC 33942 / OCh 114) (Erythrobacter sp. (strain OCh 114)).